The primary structure comprises 247 residues: tRNA pseudouridine synthase A (247 aa).

Catalysis depends on aspartate 53, which acts as the Nucleophile. Position 111 (tyrosine 111) interacts with substrate.

Belongs to the tRNA pseudouridine synthase TruA family. In terms of assembly, homodimer.

It catalyses the reaction uridine(38/39/40) in tRNA = pseudouridine(38/39/40) in tRNA. Functionally, formation of pseudouridine at positions 38, 39 and 40 in the anticodon stem and loop of transfer RNAs. The polypeptide is tRNA pseudouridine synthase A (Bacillus licheniformis (strain ATCC 14580 / DSM 13 / JCM 2505 / CCUG 7422 / NBRC 12200 / NCIMB 9375 / NCTC 10341 / NRRL NRS-1264 / Gibson 46)).